We begin with the raw amino-acid sequence, 674 residues long: MSRKNSKKLKVYYLPVTLTQFQKDLSEILISLHAKSFKASIIGEPQADAVNKPSGLPAGPETHPYPTLSQRQLTYIFDSNIRAIANHPSLLVDHYMPRQLLRMEPTESSIAGSHKFQVLNQLINSICFRDREGSPNEVIKCAIIAHSIKELDLLEGLILGKKFRTKRLSGTSLYNEKHKFPNLPTVDSTINKDGTPNSVSSTSSNSNSTSYTGYSKDDYDYSVKRNLKKRKINTDDWLFLATTKHLKHDQYLLANYDIDMIISFDPMLEVELPALQVLRNNANKDIPIIKLLVQNSPDHYLLDSEIKNSSVKSSHLSNNGHVDDSQEYEEIKSSLLYFLQARNAPVNNCEIDYIKLVKCCLEGKDCNNILPVLDLITLDEASKDSSDSGFWQPQLTKLQYSSTELPLWDGPLDIKTYQTELMHRAVIRLRDIQDEYAKGTVPLYEKRLNETQRQNQLDEIKNSVGLTFKKKQEVEKSINDSEKRLKHAMTESTKLQNKINHLLKNRQELENFNKLPSNTISSENHLEEGSALADKLKEYIDKNATLFNKLKELQQANAEKSKLNDELRSKYQIESSKAAESAQTLKILQESMKSLENEVNGPLTKFSTESLKKELERLQNDFQSLKARNKFLKNYITLMNRQYDLKNKNNVQVEKAAANGTRFRSTRSNTPNYT.

The span at 185–196 (TVDSTINKDGTP) shows a compositional bias: polar residues. Residues 185-211 (TVDSTINKDGTPNSVSSTSSNSNSTSY) form a disordered region. Residues 197-211 (NSVSSTSSNSNSTSY) show a composition bias toward low complexity. A coiled-coil region spans residues 468–637 (FKKKQEVEKS…RNKFLKNYIT (170 aa)).

This sequence belongs to the HDA2/3 family. HDA2 subfamily. In terms of assembly, heterodimer with HDA3. Component of the HDA1 histone deacetylase complex composed of at least one HDA1 homodimer and one HDA2/HDA3 heterodimer. Interacts with HDA1 and HDA3.

Its subcellular location is the nucleus. Its function is as follows. Required for activity of HDA1 histone deacetylase complex. The HDA1 histone deacetylase complex is responsible for the deacetylation of lysine residues on the N-terminal part of the core histones (H2A, H2B, H3 and H4). Histone deacetylation gives a tag for epigenetic repression and plays an important role in transcriptional regulation, cell cycle progression and developmental events. This chain is HDA1 complex subunit 2 (HDA2), found in Saccharomyces cerevisiae (strain ATCC 204508 / S288c) (Baker's yeast).